The chain runs to 301 residues: GLABROUS1 enhancer-binding protein-like 2 (301 aa).

Residues 1–62 (MATPTELGFS…NTKMASPPSN (62 aa)) are disordered. A compositionally biased stretch (basic residues) spans 44 to 54 (KKKKKKTKHNT). A non-canonical leucine-zipper region spans residues 268 to 289 (LSNEWKALCVEELKLNINKLRF).

The protein belongs to the GeBP family. Homo- and heterodimers. Interacts with GEBP, GPL1 and GPL3. Expressed in the apical meristem and young leaf primordia. Detected in the vascular tissues of cotyledons and leaves, in hydathodes and in the septun of siliques, but not in roots.

It is found in the nucleus. Functionally, probable transcription factor. May play redundant roles with GEBP and GPL1 in cytokinin responses by regulating the transcript levels of type-A ARR response genes. Involved in stress responses. Plays a repressive role in cell expansion by counteracting the positive role of CPR5 in this process, but does not regulate cell proliferation or endoreduplication. In Arabidopsis thaliana (Mouse-ear cress), this protein is GLABROUS1 enhancer-binding protein-like 2.